The sequence spans 117 residues: MAYGVPRKNTVKTILRGSCYNVQEPWDIALLAKTWSTNLANIKLPFLEEISFGGSVQLTKCTTIKDGLLPSAESIKLEREYEVKRLCKLKCQENTSKEIQLLLRERPAGLRRPLPSK.

This is an uncharacterized protein from Homo sapiens (Human).